The sequence spans 352 residues: UDP-N-acetylglucosamine--N-acetylmuramyl-(pentapeptide) pyrophosphoryl-undecaprenol N-acetylglucosamine transferase 3 (352 aa).

Residues 11–13 (SAG), arginine 164, serine 194, and glutamine 289 contribute to the UDP-N-acetyl-alpha-D-glucosamine site.

This sequence belongs to the glycosyltransferase 28 family. MurG subfamily.

It localises to the cell membrane. It carries out the reaction di-trans,octa-cis-undecaprenyl diphospho-N-acetyl-alpha-D-muramoyl-L-alanyl-D-glutamyl-meso-2,6-diaminopimeloyl-D-alanyl-D-alanine + UDP-N-acetyl-alpha-D-glucosamine = di-trans,octa-cis-undecaprenyl diphospho-[N-acetyl-alpha-D-glucosaminyl-(1-&gt;4)]-N-acetyl-alpha-D-muramoyl-L-alanyl-D-glutamyl-meso-2,6-diaminopimeloyl-D-alanyl-D-alanine + UDP + H(+). It participates in cell wall biogenesis; peptidoglycan biosynthesis. In terms of biological role, cell wall formation. Catalyzes the transfer of a GlcNAc subunit on undecaprenyl-pyrophosphoryl-MurNAc-pentapeptide (lipid intermediate I) to form undecaprenyl-pyrophosphoryl-MurNAc-(pentapeptide)GlcNAc (lipid intermediate II). The protein is UDP-N-acetylglucosamine--N-acetylmuramyl-(pentapeptide) pyrophosphoryl-undecaprenol N-acetylglucosamine transferase 3 of Bacillus thuringiensis (strain Al Hakam).